Reading from the N-terminus, the 251-residue chain is 5-oxoprolinase subunit A 2 (251 aa).

The protein belongs to the LamB/PxpA family. In terms of assembly, forms a complex composed of PxpA, PxpB and PxpC.

It catalyses the reaction 5-oxo-L-proline + ATP + 2 H2O = L-glutamate + ADP + phosphate + H(+). Catalyzes the cleavage of 5-oxoproline to form L-glutamate coupled to the hydrolysis of ATP to ADP and inorganic phosphate. This is 5-oxoprolinase subunit A 2 from Pseudomonas syringae pv. tomato (strain ATCC BAA-871 / DC3000).